The chain runs to 590 residues: Probable metalloendopeptidase G1-type (590 aa).

His-41 is a Zn(2+) binding site. Glu-44 is a catalytic residue. His-45 serves as a coordination point for Zn(2+).

It belongs to the peptidase M44 family. Requires Zn(2+) as cofactor.

Functionally, seems to be involved in viral proteins maturation by cleavage at Ala-Gly-|-Xaa motifs. This chain is Probable metalloendopeptidase G1-type (GP045L), found in Oryctolagus cuniculus (Rabbit).